Here is a 2110-residue protein sequence, read N- to C-terminus: Protein Ycf2 (2110 aa).

The segment at 190-209 (DSSQLKGSSDQSRDPLDSIS) is disordered. 1442-1449 (GSIGTGRS) provides a ligand contact to ATP.

The protein belongs to the Ycf2 family.

It localises to the plastid. The protein resides in the chloroplast stroma. Probable ATPase of unknown function. Its presence in a non-photosynthetic plant (Epifagus virginiana) and experiments in tobacco indicate that it has an essential function which is probably not related to photosynthesis. This chain is Protein Ycf2, found in Panax ginseng (Korean ginseng).